Reading from the N-terminus, the 216-residue chain is Uracil phosphoribosyltransferase (216 aa).

5-phospho-alpha-D-ribose 1-diphosphate-binding positions include Arg85, Arg110, and 135–143; that span reads DPMVATGYS. Uracil is bound by residues Ile200 and 205 to 207; that span reads GDA. Asp206 serves as a coordination point for 5-phospho-alpha-D-ribose 1-diphosphate.

Belongs to the UPRTase family. It depends on Mg(2+) as a cofactor.

The enzyme catalyses UMP + diphosphate = 5-phospho-alpha-D-ribose 1-diphosphate + uracil. The protein operates within pyrimidine metabolism; UMP biosynthesis via salvage pathway; UMP from uracil: step 1/1. Its activity is regulated as follows. Allosterically activated by GTP. Catalyzes the conversion of uracil and 5-phospho-alpha-D-ribose 1-diphosphate (PRPP) to UMP and diphosphate. In Ralstonia pickettii (strain 12J), this protein is Uracil phosphoribosyltransferase.